We begin with the raw amino-acid sequence, 311 residues long: Purine nucleoside phosphorylase (311 aa).

An N-acetylserine modification is found at Ser-2. Residues Ser-46, His-81, 101–103, and Ala-134 each bind phosphate; that span reads RLH. Glu-219 serves as a coordination point for a purine D-ribonucleoside. Phosphate is bound at residue Ser-238. Asn-261 contributes to the a purine D-ribonucleoside binding site. Ser-275 bears the Phosphoserine mark.

Belongs to the PNP/MTAP phosphorylase family.

It catalyses the reaction a purine D-ribonucleoside + phosphate = a purine nucleobase + alpha-D-ribose 1-phosphate. Its pathway is purine metabolism; purine nucleoside salvage. In terms of biological role, the purine nucleoside phosphorylases catalyze the phosphorolytic breakdown of the N-glycosidic bond in the beta-(deoxy)ribonucleoside molecules, with the formation of the corresponding free purine bases and pentose-1-phosphate. Cleaves guanosine and inosine. In Saccharomyces cerevisiae (strain ATCC 204508 / S288c) (Baker's yeast), this protein is Purine nucleoside phosphorylase (PNP1).